Here is a 167-residue protein sequence, read N- to C-terminus: Small ribosomal subunit protein uS5 (167 aa).

In terms of domain architecture, S5 DRBM spans 12-75; sequence LQEKLITVNR…EQARRNMITI (64 aa).

Belongs to the universal ribosomal protein uS5 family. Part of the 30S ribosomal subunit. Contacts proteins S4 and S8.

Its function is as follows. With S4 and S12 plays an important role in translational accuracy. Located at the back of the 30S subunit body where it stabilizes the conformation of the head with respect to the body. The polypeptide is Small ribosomal subunit protein uS5 (Buchnera aphidicola subsp. Acyrthosiphon pisum (strain APS) (Acyrthosiphon pisum symbiotic bacterium)).